A 373-amino-acid chain; its full sequence is Histidinol-phosphate aminotransferase (373 aa).

K230 carries the N6-(pyridoxal phosphate)lysine modification.

The protein belongs to the class-II pyridoxal-phosphate-dependent aminotransferase family. Histidinol-phosphate aminotransferase subfamily. Homodimer. Pyridoxal 5'-phosphate is required as a cofactor.

The catalysed reaction is L-histidinol phosphate + 2-oxoglutarate = 3-(imidazol-4-yl)-2-oxopropyl phosphate + L-glutamate. It participates in amino-acid biosynthesis; L-histidine biosynthesis; L-histidine from 5-phospho-alpha-D-ribose 1-diphosphate: step 7/9. The protein is Histidinol-phosphate aminotransferase of Synechococcus sp. (strain ATCC 27144 / PCC 6301 / SAUG 1402/1) (Anacystis nidulans).